Reading from the N-terminus, the 197-residue chain is Holliday junction branch migration complex subunit RuvA (197 aa).

Residues 1-64 are domain I; the sequence is MIALLRGLVV…EDVLALYGFL (64 aa). Residues 65–143 are domain II; the sequence is TQDEKALFEK…AATGEEPGAP (79 aa). Positions 144–153 are flexible linker; the sequence is AAEALSPIDQ. Residues 153–197 are domain III; it reads QDVLSALLNLGCARPQAEAAVRKAKAAGASLDFEPLFRRALELVR.

The protein belongs to the RuvA family. As to quaternary structure, homotetramer. Forms an RuvA(8)-RuvB(12)-Holliday junction (HJ) complex. HJ DNA is sandwiched between 2 RuvA tetramers; dsDNA enters through RuvA and exits via RuvB. An RuvB hexamer assembles on each DNA strand where it exits the tetramer. Each RuvB hexamer is contacted by two RuvA subunits (via domain III) on 2 adjacent RuvB subunits; this complex drives branch migration. In the full resolvosome a probable DNA-RuvA(4)-RuvB(12)-RuvC(2) complex forms which resolves the HJ.

It localises to the cytoplasm. Its function is as follows. The RuvA-RuvB-RuvC complex processes Holliday junction (HJ) DNA during genetic recombination and DNA repair, while the RuvA-RuvB complex plays an important role in the rescue of blocked DNA replication forks via replication fork reversal (RFR). RuvA specifically binds to HJ cruciform DNA, conferring on it an open structure. The RuvB hexamer acts as an ATP-dependent pump, pulling dsDNA into and through the RuvAB complex. HJ branch migration allows RuvC to scan DNA until it finds its consensus sequence, where it cleaves and resolves the cruciform DNA. This is Holliday junction branch migration complex subunit RuvA from Solibacter usitatus (strain Ellin6076).